Consider the following 740-residue polypeptide: Arf-GAP with coiled-coil, ANK repeat and PH domain-containing protein 1 (740 aa).

One can recognise a BAR domain in the interval 1–226 (MTVKLDFEEC…RKELGTQLHN (226 aa)). The required for formation of endosomal tubules when overexpressed with PIP5K1C stretch occupies residues 1 to 382 (MTVKLDFEEC…RGPGQVSGYH (382 aa)). The PH domain occupies 265–360 (GLVMEGHLFK…WVSAVQSSIA (96 aa)). In terms of domain architecture, Arf-GAP spans 405–527 (GQVAAQVQSV…KFLTKLPEIR (123 aa)). The tract at residues 405–740 (GQVAAQVQSV…SRRSHDLHTL (336 aa)) is required for interaction with GULP1. The segment at 420–443 (CCDCREPAPEWASINLGVTLCIQC) adopts a C4-type zinc-finger fold. A 3'-nitrotyrosine modification is found at Tyr-485. The segment at 525–562 (EIRGRRGGRGPPRGHPPVPPKPPIRPHSGIVRSKSECP) is disordered. A prevents interaction with ITGB1 when S-554 is not phosphorylated region spans residues 525-566 (EIRGRRGGRGPPRGHPPVPPKPPIRPHSGIVRSKSECPSDDM). Over residues 537–549 (RGHPPVPPKPPIR) the composition is skewed to pro residues. ANK repeat units lie at residues 606–635 (GNATPLIRATAANSLLACEFLLQNGANVNQ), 639–668 (AGRGPLHHATILGHTGLACLFLKRGADLGA), and 672–702 (EGRDPLTIAMETTNADIVTLLRLAKMREAEA).

In terms of assembly, banana-shaped homodimer laterally assembling into tetramers, the tetramers further pack helically onto the membrane. Interacts with GTP-bound ARF6. Interacts with third cytoplasmic loop of SLC2A4/GLUT4. Interacts with CLTC. Interacts with GULP1. Forms a complex with GDP-bound ARF6 and GULP1. Interacts with ITGB1; required for ITGB1 recycling.

The protein localises to the recycling endosome membrane. With respect to regulation, GAP activity stimulated by phosphatidylinositol 4,5-bisphosphate (PIP2) and phosphatidic acid. In terms of biological role, GTPase-activating protein (GAP) for ADP ribosylation factor 6 (ARF6) required for clathrin-dependent export of proteins from recycling endosomes to trans-Golgi network and cell surface. Required for regulated export of ITGB1 from recycling endosomes to the cell surface and ITGB1-dependent cell migration. In Mus musculus (Mouse), this protein is Arf-GAP with coiled-coil, ANK repeat and PH domain-containing protein 1 (Acap1).